A 506-amino-acid chain; its full sequence is 7,8-dihydro-6-hydroxymethylpterin dimethyltransferase (506 aa).

[4Fe-4S] cluster contacts are provided by C73, C77, C80, C98, C102, and C105. Residues 82-300 enclose the Radical SAM core domain; that stretch reads NHKSTTILAN…FIKLVEEQTD (219 aa).

The protein belongs to the radical SAM superfamily. [4Fe-4S] cluster is required as a cofactor. It depends on S-adenosyl-L-methionine as a cofactor.

The protein operates within cofactor biosynthesis; 5,6,7,8-tetrahydromethanopterin biosynthesis. Is responsible for the addition of methyl groups at C-7 and C-9 of the pterin ring during methanopterin (MPT) biosynthesis. Catalyzes methylation of 7,8-dihydro-6-hydroxymethylpterin, likely using methylenetetrahydromethanopterin as a methyl group donor, via a radical-based mechanism. The sequence is that of 7,8-dihydro-6-hydroxymethylpterin dimethyltransferase from Methanocaldococcus jannaschii (strain ATCC 43067 / DSM 2661 / JAL-1 / JCM 10045 / NBRC 100440) (Methanococcus jannaschii).